A 128-amino-acid polypeptide reads, in one-letter code: Small ribosomal subunit protein uS10 (128 aa).

The protein belongs to the universal ribosomal protein uS10 family.

The sequence is that of Small ribosomal subunit protein uS10 (RPS20) from Oryza sativa subsp. japonica (Rice).